The primary structure comprises 1104 residues: tRNA ligase 1 (1104 aa).

K152 serves as the catalytic N6-AMP-lysine intermediate.

The protein belongs to the TRL1 family. Requires Mg(2+) as cofactor. In terms of tissue distribution, mainly expressed in proliferating cells and tissues such as root meristems, the vasculature of developing plantlets, flowers and elongating tissue.

The protein localises to the nucleus. It localises to the cytoplasm. The catalysed reaction is ATP + (ribonucleotide)n-3'-hydroxyl + 5'-phospho-(ribonucleotide)m = (ribonucleotide)n+m + AMP + diphosphate.. Requires the presence of NTP, preferentially ATP rather than dATP, UTP, CTP and GTP, respectively, to mediate ribonucleotide 5'-phosphorylation. In terms of biological role, essential component of stress-response pathways entailing repair of RNA breaks with 2',3'-cyclic phosphate and 5'-OH ends. Tri-functional enzyme that repairs RNA breaks with 2',3'-cyclic-PO(4) and 5'-OH ends. The ligation activity requires three sequential enzymatic activities: opening of the 2'3'-cyclic phosphodiester bond of the 5' half-tRNA leaving a 2'-phosphomonoester (CPDase activity), phosphorylation of the 5' terminus of the 3' half-tRNA in the presence of ATP (kinase activity) and ligation of the two tRNA halves in an ATP-dependent reaction (ligase activity). Deficient in transferring AMP to pRNA(OH) to form AppRNA(OH) but proficient at sealing pre-adenylylated AppRNA(OH). CPDase and kinase reactions are almost insensitive to RNA length, whereas the ligase activity decreases with shorter RNA size. Can also splice DNA ended by a single 3'-terminal ribonucleoside 2',3'-cyclic-PO(4). Binds to mRNA, mature and immature. Exhibits tRNA ligase activity in vitro. Required for the splicing of precursor tRNA molecules containing introns. Can circularize an intron cleaved from a pre-tRNA by splicing endonuclease in vitro. Seems not involved in unfolded protein response (UPR) in the endoplasmic reticulum. Involved in auxin signaling and polar transport during organ morphogenesis. The polypeptide is tRNA ligase 1 (Arabidopsis thaliana (Mouse-ear cress)).